The sequence spans 72 residues: Cytochrome c oxidase subunit 8C, mitochondrial (72 aa).

The N-terminal 29 residues, 1–29, are a transit peptide targeting the mitochondrion; the sequence is MSRLLQFCSSLLRHRVVLFSKPGHSGRLS. Residues 30–40 lie on the Mitochondrial matrix side of the membrane; sequence HSESPQNQVLT. Residues 41 to 64 traverse the membrane as a helical segment; sequence PTESVVGIVVFFATFFIPAAYVMS. Residues 65–72 lie on the Mitochondrial intermembrane side of the membrane; sequence NLKFFKGE.

Belongs to the cytochrome c oxidase VIII family. As to quaternary structure, component of the cytochrome c oxidase (complex IV, CIV), a multisubunit enzyme composed of 14 subunits. The complex is composed of a catalytic core of 3 subunits MT-CO1, MT-CO2 and MT-CO3, encoded in the mitochondrial DNA, and 11 supernumerary subunits COX4I, COX5A, COX5B, COX6A, COX6B, COX6C, COX7A, COX7B, COX7C, COX8 and NDUFA4, which are encoded in the nuclear genome. The complex exists as a monomer or a dimer and forms supercomplexes (SCs) in the inner mitochondrial membrane with NADH-ubiquinone oxidoreductase (complex I, CI) and ubiquinol-cytochrome c oxidoreductase (cytochrome b-c1 complex, complex III, CIII), resulting in different assemblies (supercomplex SCI(1)III(2)IV(1) and megacomplex MCI(2)III(2)IV(2)).

It localises to the mitochondrion inner membrane. It participates in energy metabolism; oxidative phosphorylation. Component of the cytochrome c oxidase, the last enzyme in the mitochondrial electron transport chain which drives oxidative phosphorylation. The respiratory chain contains 3 multisubunit complexes succinate dehydrogenase (complex II, CII), ubiquinol-cytochrome c oxidoreductase (cytochrome b-c1 complex, complex III, CIII) and cytochrome c oxidase (complex IV, CIV), that cooperate to transfer electrons derived from NADH and succinate to molecular oxygen, creating an electrochemical gradient over the inner membrane that drives transmembrane transport and the ATP synthase. Cytochrome c oxidase is the component of the respiratory chain that catalyzes the reduction of oxygen to water. Electrons originating from reduced cytochrome c in the intermembrane space (IMS) are transferred via the dinuclear copper A center (CU(A)) of subunit 2 and heme A of subunit 1 to the active site in subunit 1, a binuclear center (BNC) formed by heme A3 and copper B (CU(B)). The BNC reduces molecular oxygen to 2 water molecules using 4 electrons from cytochrome c in the IMS and 4 protons from the mitochondrial matrix. This chain is Cytochrome c oxidase subunit 8C, mitochondrial (Cox8c), found in Rattus norvegicus (Rat).